A 533-amino-acid chain; its full sequence is Chromosomal replication initiator protein DnaA (533 aa).

The segment at 1–72 (MNDFWQHCSA…DLARDFWNAP (72 aa)) is domain I, interacts with DnaA modulators. The segment at 72–196 (PIEVQFVLDP…EAADSMYERS (125 aa)) is domain II. Positions 83–110 (AGQRSPAGATPLAPRAPLPSANPAPVGP) are disordered. Pro residues predominate over residues 96 to 110 (PRAPLPSANPAPVGP). The segment at 197-413 (KLNPVLTFDN…GALRKILAYS (217 aa)) is domain III, AAA+ region. ATP contacts are provided by glycine 241, glycine 243, lysine 244, and threonine 245. The interval 414–533 (KFHGREITIE…LHVLEQTLKG (120 aa)) is domain IV, binds dsDNA.

It belongs to the DnaA family. Oligomerizes as a right-handed, spiral filament on DNA at oriC.

It is found in the cytoplasm. Its function is as follows. Plays an essential role in the initiation and regulation of chromosomal replication. ATP-DnaA binds to the origin of replication (oriC) to initiate formation of the DNA replication initiation complex once per cell cycle. Binds the DnaA box (a 9 base pair repeat at the origin) and separates the double-stranded (ds)DNA. Forms a right-handed helical filament on oriC DNA; dsDNA binds to the exterior of the filament while single-stranded (ss)DNA is stabiized in the filament's interior. The ATP-DnaA-oriC complex binds and stabilizes one strand of the AT-rich DNA unwinding element (DUE), permitting loading of DNA polymerase. After initiation quickly degrades to an ADP-DnaA complex that is not apt for DNA replication. Binds acidic phospholipids. This chain is Chromosomal replication initiator protein DnaA, found in Burkholderia mallei (strain NCTC 10247).